Reading from the N-terminus, the 339-residue chain is MPSASDHSFSFPILIGDIGGTNARFALLVDAASEPTQLPPVKTGDFATIEDALQNGIFNKISVRPRSAILAVAGPIKSDEIPLTNAGWVIRPKDMLARLGLEDVLVINDFEAQALAIAAPADQDVVQIGGGSVRPRSSRVVLGPGTGLGVAGLVFAQDTWIPVPGEGGHVDIGPRTERDFRIWPFLDPIEGRMAGEQILCGRGIMNLYRAVCAADGVEPLFKDQAEVTTSALSGDDPAAIETVTLFATYLGRVAGDMALVFMARGGVFLAGGISQKILPALMRPDFRAAFEDKAPHSALMRTIPTFAVVHPMAALSGLAAFARAPRDFGVAMEGRRWRS.

Position 16–21 (16–21) interacts with ATP; the sequence is GDIGGT.

It belongs to the bacterial glucokinase family.

The protein resides in the cytoplasm. The enzyme catalyses D-glucose + ATP = D-glucose 6-phosphate + ADP + H(+). This is Glucokinase from Sinorhizobium fredii (strain NBRC 101917 / NGR234).